Consider the following 346-residue polypeptide: Glycerol-1-phosphate dehydrogenase [NAD(P)+] (346 aa).

NAD(+)-binding positions include Gly-93–Asp-97 and Thr-115–Ser-118. Residue Asp-120 participates in substrate binding. Ser-124 serves as a coordination point for NAD(+). Asp-167 contributes to the substrate binding site. Residues Asp-167 and His-247 each contribute to the Zn(2+) site. His-251 provides a ligand contact to substrate. His-263 is a binding site for Zn(2+).

The protein belongs to the glycerol-1-phosphate dehydrogenase family. Requires Zn(2+) as cofactor.

It localises to the cytoplasm. The enzyme catalyses sn-glycerol 1-phosphate + NAD(+) = dihydroxyacetone phosphate + NADH + H(+). It carries out the reaction sn-glycerol 1-phosphate + NADP(+) = dihydroxyacetone phosphate + NADPH + H(+). The protein operates within membrane lipid metabolism; glycerophospholipid metabolism. Its function is as follows. Catalyzes the NAD(P)H-dependent reduction of dihydroxyacetonephosphate (DHAP or glycerone phosphate) to glycerol 1-phosphate (G1P). The G1P thus generated is used as the glycerophosphate backbone of phospholipids in the cellular membranes of Archaea. The chain is Glycerol-1-phosphate dehydrogenase [NAD(P)+] from Pyrococcus abyssi (strain GE5 / Orsay).